Consider the following 166-residue polypeptide: Large ribosomal subunit protein uL10 (166 aa).

The protein belongs to the universal ribosomal protein uL10 family. Part of the ribosomal stalk of the 50S ribosomal subunit. The N-terminus interacts with L11 and the large rRNA to form the base of the stalk. The C-terminus forms an elongated spine to which L12 dimers bind in a sequential fashion forming a multimeric L10(L12)X complex.

In terms of biological role, forms part of the ribosomal stalk, playing a central role in the interaction of the ribosome with GTP-bound translation factors. The polypeptide is Large ribosomal subunit protein uL10 (Streptococcus sanguinis (strain SK36)).